A 1034-amino-acid polypeptide reads, in one-letter code: FACT complex subunit spt-16 (1034 aa).

3 stretches are compositionally biased toward basic and acidic residues: residues 433 to 448, 463 to 481, and 493 to 503; these read EEQE…DQKK, TRNK…KELG, and SKQDGGTDEKK. The segment at 433–511 is disordered; the sequence is EEQENRETER…KKVKKSNVSY (79 aa). Positions 617–642 form a coiled coil; it reads LSTAFRQIKEMQKRFRTEEAEEREKD. Composition is skewed to acidic residues over residues 926-950 and 959-983; these read AESE…EADA and SDED…DSDE. Residues 926-1034 are disordered; that stretch reads AESEGEDAGD…KAGPSHKRRK (109 aa). A compositionally biased stretch (basic and acidic residues) spans 984-1020; that stretch reads SEGKDWSDLEEEAAKADKRREVEDGGRDRDRDRDRKR. Over residues 1021–1034 the composition is skewed to basic residues; the sequence is PSSSKAGPSHKRRK.

Belongs to the peptidase M24 family. SPT16 subfamily. As to quaternary structure, component of the FACT complex, a stable heterodimer of spt-16 and hmg-3 or hmg-4.

The protein localises to the nucleus. It is found in the chromosome. Its function is as follows. Component of the FACT complex, a general chromatin factor that acts to reorganize nucleosomes. The FACT complex is involved in multiple processes that require DNA as a template such as mRNA elongation, DNA replication and DNA repair. During transcription elongation the FACT complex acts as a histone chaperone that both destabilizes and restores nucleosomal structure. It facilitates the passage of RNA polymerase II and transcription by promoting the dissociation of one histone H2A-H2B dimer from the nucleosome, then subsequently promotes the reestablishment of the nucleosome following the passage of RNA polymerase II. The protein is FACT complex subunit spt-16 (spt-16) of Caenorhabditis briggsae.